The following is a 110-amino-acid chain: Flagellar hook-basal body complex protein FliE (110 aa).

This sequence belongs to the FliE family.

The protein resides in the bacterial flagellum basal body. This chain is Flagellar hook-basal body complex protein FliE, found in Ralstonia nicotianae (strain ATCC BAA-1114 / GMI1000) (Ralstonia solanacearum).